A 158-amino-acid polypeptide reads, in one-letter code: Sec-independent protein translocase protein TatB (158 aa).

Residues 1 to 21 (MFDIGWSELLVIGVVALVVVG) traverse the membrane as a helical segment. Residues 73-158 (RSMGLDAMKQ…PAPAEPKSNA (86 aa)) are disordered. A compositionally biased stretch (basic and acidic residues) spans 83–92 (AADRFEKWDP). 2 stretches are compositionally biased toward low complexity: residues 94–132 (KPQQ…SEPA) and 138–158 (APAA…KSNA).

It belongs to the TatB family. The Tat system comprises two distinct complexes: a TatABC complex, containing multiple copies of TatA, TatB and TatC subunits, and a separate TatA complex, containing only TatA subunits. Substrates initially bind to the TatABC complex, which probably triggers association of the separate TatA complex to form the active translocon.

The protein localises to the cell inner membrane. Part of the twin-arginine translocation (Tat) system that transports large folded proteins containing a characteristic twin-arginine motif in their signal peptide across membranes. Together with TatC, TatB is part of a receptor directly interacting with Tat signal peptides. TatB may form an oligomeric binding site that transiently accommodates folded Tat precursor proteins before their translocation. The chain is Sec-independent protein translocase protein TatB from Cereibacter sphaeroides (strain ATCC 17029 / ATH 2.4.9) (Rhodobacter sphaeroides).